We begin with the raw amino-acid sequence, 62 residues long: Photosystem II reaction center X protein (62 aa).

The chain crosses the membrane as a helical span at residues 26-46 (IASFFAAALLIVIPAAAFLIF).

This sequence belongs to the PsbX family. Type 2 subfamily. PSII consists of a core antenna complex that captures photons, and an electron transfer chain that converts photonic excitation into a charge separation. PSII forms dimeric complexes.

It localises to the cellular thylakoid membrane. In terms of biological role, involved in the binding and/or turnover of quinones at the Q(B) site of Photosystem II. This chain is Photosystem II reaction center X protein, found in Prochlorococcus marinus subsp. pastoris (strain CCMP1986 / NIES-2087 / MED4).